Here is an 81-residue protein sequence, read N- to C-terminus: Exodeoxyribonuclease 7 small subunit (81 aa).

It belongs to the XseB family. In terms of assembly, heterooligomer composed of large and small subunits.

Its subcellular location is the cytoplasm. It catalyses the reaction Exonucleolytic cleavage in either 5'- to 3'- or 3'- to 5'-direction to yield nucleoside 5'-phosphates.. Functionally, bidirectionally degrades single-stranded DNA into large acid-insoluble oligonucleotides, which are then degraded further into small acid-soluble oligonucleotides. This is Exodeoxyribonuclease 7 small subunit from Nitratidesulfovibrio vulgaris (strain ATCC 29579 / DSM 644 / CCUG 34227 / NCIMB 8303 / VKM B-1760 / Hildenborough) (Desulfovibrio vulgaris).